The sequence spans 316 residues: Ornithine carbamoyltransferase (316 aa).

Residues 57–60 (STRT), Gln-84, Arg-108, and 135–138 (HPCQ) each bind carbamoyl phosphate. L-ornithine-binding positions include Asn-166, Asp-230, and 234–235 (SM). Carbamoyl phosphate is bound by residues 269 to 270 (CL) and Arg-297.

Belongs to the aspartate/ornithine carbamoyltransferase superfamily. OTCase family.

It localises to the cytoplasm. It carries out the reaction carbamoyl phosphate + L-ornithine = L-citrulline + phosphate + H(+). It functions in the pathway amino-acid degradation; L-arginine degradation via ADI pathway; carbamoyl phosphate from L-arginine: step 2/2. Functionally, reversibly catalyzes the transfer of the carbamoyl group from carbamoyl phosphate (CP) to the N(epsilon) atom of ornithine (ORN) to produce L-citrulline. This Bacillus cereus (strain 03BB102) protein is Ornithine carbamoyltransferase.